A 682-amino-acid chain; its full sequence is Protein SPT2 homolog (682 aa).

The tract at residues 1-569 (MDFREILLIA…PLLSGYRSAQ (569 aa)) is important for interaction with DNA. A Glycyl lysine isopeptide (Lys-Gly) (interchain with G-Cter in SUMO2) cross-link involves residue Lys-37. Positions 46–82 (AFLRRKEEELRQKALEEKKRKEELVKKRIELKHDKKA) form a coiled coil. The disordered stretch occupies residues 80–170 (KKARAMAKRT…SAPSPMNFTD (91 aa)). The span at 101 to 111 (VEEKTKKKQLV) shows a compositional bias: basic and acidic residues. Residues 121–131 (QEYDVEEEDFI) show a composition bias toward acidic residues. The span at 156–165 (KAPLKSAPSP) shows a compositional bias: low complexity. Lys-186 is covalently cross-linked (Glycyl lysine isopeptide (Lys-Gly) (interchain with G-Cter in SUMO2)). The segment covering 187-208 (VVKKAEDRPLTAEELREREFLE) has biased composition (basic and acidic residues). Disordered stretches follow at residues 187 to 533 (VVKK…TKPR) and 549 to 595 (RSSN…DEYD). 5 stretches are compositionally biased toward polar residues: residues 267 to 280 (STAS…SSPK), 317 to 334 (STCS…TQKS), 371 to 393 (PGSN…TLSS), 400 to 409 (QNGSSSSGPE), and 419 to 432 (ASNS…LNGT). Phosphoserine is present on Ser-277. Low complexity-rich tracts occupy residues 435–460 (PGRP…RPVG) and 490–504 (SGPG…PAGR). The interval 570 to 682 (GPQRLPFPTG…RRKAKKLKRH (113 aa)) is important for interaction with histones. Residue Lys-581 is modified to N6-acetyllysine. The span at 586–595 (YEEDDDDEYD) shows a compositional bias: acidic residues. Residue Ser-596 is modified to Phosphoserine. Composition is skewed to basic and acidic residues over residues 641-652 (SWKEQQKEEAKS) and 663-672 (EMRREEEELK). The tract at residues 641–682 (SWKEQQKEEAKSLRLGMQEDLEEMRREEEELKRRKAKKLKRH) is disordered. Residues 642 to 682 (WKEQQKEEAKSLRLGMQEDLEEMRREEEELKRRKAKKLKRH) adopt a coiled-coil conformation. The segment covering 673–682 (RRKAKKLKRH) has biased composition (basic residues).

Belongs to the SPT2 family. In terms of assembly, interacts with histones. Interacts with a heterotetrameric complex formed by histone H3 and H4, especially when the histone tetramer is not bound to DNA. Interacts with histone H3.3.

It is found in the nucleus. The protein resides in the nucleolus. In terms of biological role, histone chaperone that stabilizes pre-existing histone tetramers and regulates replication-independent histone exchange on chromatin. Required for normal chromatin refolding in the coding region of transcribed genes, and for the suppression of spurious transcription. Binds DNA and histones and promotes nucleosome assembly (in vitro). Facilitates formation of tetrameric histone complexes containing histone H3 and H4. Modulates RNA polymerase 1-mediated transcription. Binds DNA, with a preference for branched DNA species, such as Y-form DNA and Holliday junction DNA. This chain is Protein SPT2 homolog (Spty2d1), found in Mus musculus (Mouse).